We begin with the raw amino-acid sequence, 315 residues long: Olfactory receptor 3A10 (315 aa).

Residues 1 to 28 lie on the Extracellular side of the membrane; it reads MEPGAWGNRTAVTDFILLGLTGNVRLQP. A glycan (N-linked (GlcNAc...) asparagine) is linked at Asn8. A helical transmembrane segment spans residues 29–49; the sequence is ILFVVFFFAYIVTVGGNLSIL. Over 50–68 the chain is Cytoplasmic; the sequence is AAIFVEPKLHTPMYYFLGN. Residues 69-89 form a helical membrane-spanning segment; the sequence is LSLLDIGCISVTVPPMLVCLL. At 90 to 97 the chain is on the extracellular side; the sequence is AHECRVPY. Residues 98-118 traverse the membrane as a helical segment; it reads AACISQLFFFHLLAGVDCHLL. An intrachain disulfide couples Cys100 to Cys192. Residues 119–145 lie on the Cytoplasmic side of the membrane; that stretch reads TAMAYDRYLAICQPLTYSTRMSREVQG. A helical transmembrane segment spans residues 146-166; it reads TLVGICCTVSFINALTHTVAV. Residues 167 to 200 are Extracellular-facing; it reads SVLDFCGPNVVNHFYCDLPPLFQLSCSSIYLNGQ. A helical membrane pass occupies residues 201–221; that stretch reads LLFVGATFMGVVPMILISVSY. Residues 222-239 lie on the Cytoplasmic side of the membrane; the sequence is AHVAAAVLRIRSTEGRKK. Residues 240–260 form a helical membrane-spanning segment; the sequence is AFSTCGSHLTVVCIFYGTGFF. Topologically, residues 261-274 are extracellular; sequence SYMRLGSVSASDKD. Residues 275-295 traverse the membrane as a helical segment; sequence KGIGILNTILSPMLNPLIYSL. At 296–315 the chain is on the cytoplasmic side; it reads RNPDVQGALKRVLTGKRYPV.

This sequence belongs to the G-protein coupled receptor 1 family.

It localises to the cell membrane. Its function is as follows. Odorant receptor. This Mus musculus (Mouse) protein is Olfactory receptor 3A10.